Consider the following 530-residue polypeptide: Alkyl hydroperoxide reductase subunit F (530 aa).

FAD is bound at residue 214–229; sequence DVLVVGGGPAGSAAAV. Cys-344 and Cys-347 form a disulfide bridge. 356–370 is an NAD(+) binding site; sequence RVAVIGGGNSGVEAA. An FAD-binding site is contributed by 477-487; that stretch reads TDVPGVFAAGD.

This sequence belongs to the class-II pyridine nucleotide-disulfide oxidoreductase family. In terms of assembly, homodimer. FAD is required as a cofactor.

Its function is as follows. Serves to protect the cell against DNA damage by alkyl hydroperoxides. It can use either NADH or NADPH as electron donor for direct reduction of redox dyes or of alkyl hydroperoxides when combined with the AhpC protein. This chain is Alkyl hydroperoxide reductase subunit F (ahpF), found in Xanthomonas campestris pv. phaseoli.